The following is an 883-amino-acid chain: Leucine--tRNA ligase (883 aa).

The 'HIGH' region motif lies at 43 to 53 (PYPSGRIHIGH). The 'KMSKS' region motif lies at 630-634 (KMSKS). Lys-633 contacts ATP.

It belongs to the class-I aminoacyl-tRNA synthetase family.

It is found in the cytoplasm. It carries out the reaction tRNA(Leu) + L-leucine + ATP = L-leucyl-tRNA(Leu) + AMP + diphosphate. The chain is Leucine--tRNA ligase from Nitrobacter winogradskyi (strain ATCC 25391 / DSM 10237 / CIP 104748 / NCIMB 11846 / Nb-255).